The sequence spans 386 residues: Glycerate dehydrogenase HPR, peroxisomal (386 aa).

NAD(+) contacts are provided by residues 175–176, 271–273, and aspartate 297; these read RI and CSR. Residue arginine 273 is part of the active site. Residue glutamate 302 is part of the active site. The active-site Proton donor is histidine 320. Position 320-323 (320-323) interacts with NAD(+); that stretch reads HIAS. The short motif at 384–386 is the Microbody targeting signal element; the sequence is SKL.

It belongs to the D-isomer specific 2-hydroxyacid dehydrogenase family. In terms of tissue distribution, present in leaves (at protein level). Mostly expressed in photosynthetic tissues such as leaves, stems, flowers, buds, and, to a lower extent, in siliques and roots.

The protein resides in the peroxisome. The catalysed reaction is (R)-glycerate + NAD(+) = 3-hydroxypyruvate + NADH + H(+). The protein operates within photosynthesis; photorespiration; 3-phospho-D-glycerate from glycine: step 3/4. Its activity is regulated as follows. Slightly inhibited by oxalate. Functionally, catalyzes the NADH-dependent reduction of hydroxypyruvate into glycerate in the photorespiratory core cycle. Mediates fatty acid beta-oxidation in germinating seeds when malate dehydrogenase is absent. In Arabidopsis thaliana (Mouse-ear cress), this protein is Glycerate dehydrogenase HPR, peroxisomal (HPR).